The chain runs to 879 residues: Alanine--tRNA ligase (879 aa).

Zn(2+) is bound by residues His-566, His-570, Cys-668, and His-672.

This sequence belongs to the class-II aminoacyl-tRNA synthetase family. The cofactor is Zn(2+).

It is found in the cytoplasm. The enzyme catalyses tRNA(Ala) + L-alanine + ATP = L-alanyl-tRNA(Ala) + AMP + diphosphate. Functionally, catalyzes the attachment of alanine to tRNA(Ala) in a two-step reaction: alanine is first activated by ATP to form Ala-AMP and then transferred to the acceptor end of tRNA(Ala). Also edits incorrectly charged Ser-tRNA(Ala) and Gly-tRNA(Ala) via its editing domain. The chain is Alanine--tRNA ligase from Clostridium tetani (strain Massachusetts / E88).